The chain runs to 245 residues: Probable transcriptional regulatory protein Aflv_0709 (245 aa).

Over residues 1–14 the composition is skewed to basic residues; that stretch reads MAGHSKWKNIQRRK. Residues 1–21 form a disordered region; sequence MAGHSKWKNIQRRKNAQDAKR.

The protein belongs to the TACO1 family.

The protein resides in the cytoplasm. The sequence is that of Probable transcriptional regulatory protein Aflv_0709 from Anoxybacillus flavithermus (strain DSM 21510 / WK1).